The sequence spans 306 residues: MINPIYLILADFFDRYIGEPPEKVHPVVFIGKLISFFENVFKSTNSVNKNRDLLFGFLNVVLVLAIVFFMAFEIEQAINSISNSYIRISLYSIILSFSIGHKSLIEFSKSPIKFIVNNDLESAKKSVQCIVSRNTNELDKKHVLSASIESASENITDSIIAPLIYAAIFGLPGAFLYRAVNTFDAMIGYKSEKYLYYGKTAAYLDDILNFIPSRIAGMLLIISAPFYGGNVKSALLGYFNEGSKTPSPNSGYTMATLANSLSMELEKIGYYKLGKGEITVEKALNSLKAVDYSVLLFLIIYMILFM.

A run of 5 helical transmembrane segments spans residues Leu-54 to Ile-74, Ile-88 to Ser-108, Ile-155 to Phe-175, Ile-207 to Tyr-227, and Ser-286 to Met-306.

The protein belongs to the CobD/CbiB family.

Its subcellular location is the cell membrane. It participates in cofactor biosynthesis; adenosylcobalamin biosynthesis. In terms of biological role, converts cobyric acid to cobinamide by the addition of aminopropanol on the F carboxylic group. The polypeptide is Probable cobalamin biosynthesis protein CobD (Methanococcus maripaludis (strain DSM 14266 / JCM 13030 / NBRC 101832 / S2 / LL)).